A 666-amino-acid chain; its full sequence is L-aspartate N-monooxygenase (nitrosuccinate-forming) (666 aa).

The segment at leucine 645–alanine 666 is disordered. Over residues proline 656–alanine 666 the composition is skewed to basic and acidic residues.

Belongs to the nitrosuccinic acid synthase family. Requires FAD as cofactor.

The catalysed reaction is L-aspartate + 3 NADPH + 3 O2 + 2 H(+) = 2-nitrobutanedioate + 3 NADP(+) + 4 H2O. It participates in antibiotic biosynthesis. Functionally, part of a gene cluster involved in the biosynthesis of cremeomycin, a light-sensitive o-diazoquinone with antibacterial and antiproliferative effects. Catalyzes the iterative oxidation of L-aspartic acid to nitrosuccinic acid (2-nitrobutanedioate) via N-hydroxyaspartic acid and nitrososuccinic acid. This Streptomyces cremeus protein is L-aspartate N-monooxygenase (nitrosuccinate-forming).